A 370-amino-acid polypeptide reads, in one-letter code: Pantothenate kinase 3 (370 aa).

The active-site Proton acceptor is glutamate 138. Acetyl-CoA is bound by residues serine 192, serine 195, and arginine 207.

Belongs to the type II pantothenate kinase family. As to quaternary structure, homodimer.

Its subcellular location is the cytoplasm. The catalysed reaction is (R)-pantothenate + ATP = (R)-4'-phosphopantothenate + ADP + H(+). Its pathway is cofactor biosynthesis; coenzyme A biosynthesis; CoA from (R)-pantothenate: step 1/5. Subject to allosteric regulation, exists in two distinct conformational states, a catalytically incompetent (or open) conformation stabilized by the binding of acetyl(acyl)-CoA, and a catalytically competent (or closed) conformation stabilized by ATP-binding. Inhibited by acetyl-CoA and its thioesters which act as allosteric inhibitors and compete with the ATP-binding site. Its function is as follows. Catalyzes the phosphorylation of pantothenate to generate 4'-phosphopantothenate in the first and rate-determining step of coenzyme A (CoA) synthesis. The sequence is that of Pantothenate kinase 3 (PANK3) from Bos taurus (Bovine).